We begin with the raw amino-acid sequence, 300 residues long: NAD kinase (300 aa).

Residue D77 is the Proton acceptor of the active site. Residues 77-78, 151-152, H162, R179, D181, and 192-197 each bind NAD(+); these read DG, ND, and TAYSLS.

The protein belongs to the NAD kinase family. It depends on a divalent metal cation as a cofactor.

It is found in the cytoplasm. The catalysed reaction is NAD(+) + ATP = ADP + NADP(+) + H(+). Its function is as follows. Involved in the regulation of the intracellular balance of NAD and NADP, and is a key enzyme in the biosynthesis of NADP. Catalyzes specifically the phosphorylation on 2'-hydroxyl of the adenosine moiety of NAD to yield NADP. This chain is NAD kinase, found in Cellvibrio japonicus (strain Ueda107) (Pseudomonas fluorescens subsp. cellulosa).